The following is a 517-amino-acid chain: Heat shock 70-related protein 5 (517 aa).

Belongs to the heat shock protein 70 family.

May function in protein folding and assembly, and disassembly of protein complexes. This is Heat shock 70-related protein 5 from Dictyostelium discoideum (Social amoeba).